The chain runs to 808 residues: Bifunctional uridylyltransferase/uridylyl-removing enzyme (808 aa).

The segment at 1-315 is uridylyltransferase; that stretch reads MEAESPCAAS…ALVRRPKRRP (315 aa). Residues 316–609 are uridylyl-removing; the sequence is LDEGVVEYAG…EISPRDGERI (294 aa). In terms of domain architecture, HD spans 430 to 544; that stretch reads VDRHVVETAV…LEVLHALSEA (115 aa). ACT domains lie at 610–686 and 730–805; these read DAVI…GMLQ and ILEV…VDEP.

This sequence belongs to the GlnD family. Mg(2+) serves as cofactor.

The enzyme catalyses [protein-PII]-L-tyrosine + UTP = [protein-PII]-uridylyl-L-tyrosine + diphosphate. It carries out the reaction [protein-PII]-uridylyl-L-tyrosine + H2O = [protein-PII]-L-tyrosine + UMP + H(+). Modifies, by uridylylation and deuridylylation, the PII regulatory protein (GlnB), in response to the nitrogen status of the cell that GlnD senses through the glutamine level. Under low glutamine levels, catalyzes the conversion of the PII protein and UTP to PII-UMP and PPi, while under higher glutamine levels, GlnD hydrolyzes PII-UMP to PII and UMP (deuridylylation). Thus, controls uridylylation state and activity of the PII protein, and plays an important role in the regulation of nitrogen assimilation and metabolism. This chain is Bifunctional uridylyltransferase/uridylyl-removing enzyme, found in Mycobacterium tuberculosis (strain CDC 1551 / Oshkosh).